The following is a 345-amino-acid chain: Tubulin-folding cofactor C (345 aa).

M1 carries the N-acetylmethionine modification. A compositionally biased stretch (polar residues) spans 1-10 (MEDDGQSSVA). The interval 1–83 (MEDDGQSSVA…SRLASSSTDS (83 aa)) is disordered. Basic and acidic residues predominate over residues 23–39 (DMLERLSARHQARKSDS). Residues 40–55 (PDSSSSSSSTLESTSS) show a composition bias toward low complexity. The segment covering 61–73 (SDSKRSIESRIAE) has biased composition (basic and acidic residues). Residues 74–83 (SRLASSSTDS) are compositionally biased toward low complexity. The region spanning 169–318 (PPKLVPVRDS…NWANVDDFRW (150 aa)) is the C-CAP/cofactor C-like domain.

Belongs to the TBCC family. As to quaternary structure, supercomplex made of cofactors A to E. Cofactors A and D function by capturing and stabilizing tubulin in a quasi-native conformation. Cofactor E binds to the cofactor D-tubulin complex; interaction with cofactor C then causes the release of tubulin polypeptides that are committed to the native state. As to expression, ubiquitously expressed (at protein level). Present in leaves, roots, flowers, and stems.

It localises to the cytoplasm. Functionally, essential tubulin-folding protein involved in the final step of the tubulin folding pathway. Required for continuous microtubule cytoskeleton organization, mitotic division, cytokinesis, and to couple cell cycle progression to cell division in embryos and endosperms. Not essential for cell viability. Binds probably to the multimeric supercomplex, stimulating GTP hydrolysis by the bound beta-tubulin and the release of the alpha-/beta-tubulin heterodimer. The sequence is that of Tubulin-folding cofactor C (TFCC) from Arabidopsis thaliana (Mouse-ear cress).